Consider the following 602-residue polypeptide: T-box transcription factor TBX15 (602 aa).

A disordered region spans residues 43 to 95; sequence SMEALSPAGPLGDTDDPATHGLEPHPDSEQSTGSDSEVLTERTSCSFSTHTDL. Residues 71-94 are compositionally biased toward polar residues; sequence EQSTGSDSEVLTERTSCSFSTHTD. The T-box DNA-binding region spans 122 to 304; sequence LWKRFHDIGT…RNPFAKGFRD (183 aa). Thr330 carries the phosphothreonine modification. Disordered stretches follow at residues 338 to 369 and 425 to 444; these read QKQQ…LSPS and QSGT…QRTP. Low complexity predominate over residues 346-369; that stretch reads GTSPTTSSTGTPSPSASSHLLSPS.

In terms of assembly, can form a heterodimer with TBX18.

It localises to the nucleus. Probable transcriptional regulator involved in the development of the skeleton of the limb, vertebral column and head. Acts by controlling the number of mesenchymal precursor cells and chondrocytes. The sequence is that of T-box transcription factor TBX15 (Tbx15) from Mus musculus (Mouse).